A 135-amino-acid chain; its full sequence is Probable disulfide formation protein (135 aa).

Residues Ser-7–Tyr-26 form a helical membrane-spanning segment. A disulfide bridge connects residues Cys-36 and Cys-39. 2 consecutive transmembrane segments (helical) span residues Tyr-41–Asp-60 and Tyr-67–Cys-84. The cysteines at positions 96 and 101 are disulfide-linked. A helical transmembrane segment spans residues Gly-109 to Ala-131.

This sequence belongs to the DsbB family. BdbC subfamily.

Its subcellular location is the cell inner membrane. Required for disulfide bond formation in some proteins. In Chlamydia muridarum (strain MoPn / Nigg), this protein is Probable disulfide formation protein.